The primary structure comprises 416 residues: TNF receptor-associated factor 1 (416 aa).

Residues 1 to 24 (MASSSGSSPRPAPDENEFPFGCPP) form a disordered region. S146 bears the Phosphoserine mark. Residues 182–264 (MKEKLLAELE…QSLRLMEEAS (83 aa)) adopt a coiled-coil conformation. Glycyl lysine isopeptide (Lys-Gly) (interchain with G-Cter in ubiquitin) cross-links involve residues K185 and K193. Residues 266-412 (DGTFLWKITN…DDTMFLKCIV (147 aa)) enclose the MATH domain.

Homotrimer. Heterotrimer with TRAF2. Interacts with TNFRSF1A/TNFR1, TNFRSF1B/TNFR2, TNFRSF4, TNFRSF5/CD40, TNFRSF8/CD30, TNFRSF9/CD137, TNFRSF11A/RANK, TNFRSF13C, TNFRSF18/AITR, TNFRSF17/BCMA, TNFRSF19/TROY, TNFRSF19L/RELT, XEDAR, EDAR, Epstein-Barr virus BNFL1/LMP-1, TANK/ITRAF, TRAIP and RIPK2. Interacts with BIRC2 and BIRC3 N-terminus; a single BIRC2 or BIRC3 molecule interacts with a heterotrimer formed by TRAF1 and TRAF2. Interacts with NFATC2IP, TRAFD1 and with HIVEP3. Interacts with MAP3K14. Interacts with GPS2. Polyubiquitinated by BIRC2 and/or BIRC3, leading to its subsequent proteasomal degradation. Ubiquitinated by the SCF(FBXL2) complex, leading to its degradation by the proteasome.

Adapter molecule that regulates the activation of NF-kappa-B and JNK. Plays a role in the regulation of cell survival and apoptosis. The heterotrimer formed by TRAF1 and TRAF2 is part of a E3 ubiquitin-protein ligase complex that promotes ubiquitination of target proteins, such as MAP3K14. The TRAF1/TRAF2 complex recruits the antiapoptotic E3 protein-ubiquitin ligases BIRC2 and BIRC3 to TNFRSF1B/TNFR2. In Homo sapiens (Human), this protein is TNF receptor-associated factor 1 (TRAF1).